Reading from the N-terminus, the 298-residue chain is Small ribosomal subunit protein uS2 (298 aa).

Belongs to the universal ribosomal protein uS2 family.

In Leifsonia xyli subsp. xyli (strain CTCB07), this protein is Small ribosomal subunit protein uS2.